We begin with the raw amino-acid sequence, 474 residues long: Zinc finger protein 230 (474 aa).

Residues 8 to 76 form the KRAB domain; that stretch reads VTFKDVAVFF…ETATQREGNS (69 aa). Residues 80-167 form a KRNB region; it reads TIAEAGPHED…PQQFHSGEKS (88 aa). 9 C2H2-type zinc fingers span residues 168–190, 196–218, 224–246, 252–274, 280–302, 308–330, 336–358, 364–386, and 392–414; these read HTCN…QRVH, SKCD…ERVH, FKCE…CKLH, YICE…QIIH, FKCE…CMVH, YKSE…QIIH, YNCK…QRIH, YRCE…QRVH, and YNCK…KKLH. A C2H2-type 10; atypical zinc finger spans residues 420–442; the sequence is FKCEDCGKRLVHRSFCKDQQGDH.

This sequence belongs to the krueppel C2H2-type zinc-finger protein family.

It is found in the nucleus. Its function is as follows. May be involved in transcriptional regulation. The chain is Zinc finger protein 230 (ZNF230) from Homo sapiens (Human).